Reading from the N-terminus, the 156-residue chain is Ribosomal RNA large subunit methyltransferase H (156 aa).

S-adenosyl-L-methionine contacts are provided by residues leucine 73, glycine 104, and 123–128 (ISSMTL).

Belongs to the RNA methyltransferase RlmH family. In terms of assembly, homodimer.

It is found in the cytoplasm. It carries out the reaction pseudouridine(1915) in 23S rRNA + S-adenosyl-L-methionine = N(3)-methylpseudouridine(1915) in 23S rRNA + S-adenosyl-L-homocysteine + H(+). In terms of biological role, specifically methylates the pseudouridine at position 1915 (m3Psi1915) in 23S rRNA. The protein is Ribosomal RNA large subunit methyltransferase H of Burkholderia cenocepacia (strain HI2424).